The following is a 288-amino-acid chain: 2-dehydro-3-deoxyphosphooctonate aldolase (288 aa).

It belongs to the KdsA family.

The protein resides in the cytoplasm. It carries out the reaction D-arabinose 5-phosphate + phosphoenolpyruvate + H2O = 3-deoxy-alpha-D-manno-2-octulosonate-8-phosphate + phosphate. It participates in carbohydrate biosynthesis; 3-deoxy-D-manno-octulosonate biosynthesis; 3-deoxy-D-manno-octulosonate from D-ribulose 5-phosphate: step 2/3. Its pathway is bacterial outer membrane biogenesis; lipopolysaccharide biosynthesis. The polypeptide is 2-dehydro-3-deoxyphosphooctonate aldolase (Syntrophobacter fumaroxidans (strain DSM 10017 / MPOB)).